The chain runs to 838 residues: Periostin (838 aa).

The signal sequence occupies residues 1 to 23 (MVPLLPLYALLLLFLCDINPANA). The EMI domain occupies 42–96 (GPNVCALQQILGTKKKYFSSCKNWYQGAICGKKTTVLYECCPGYMRMEGMKGCPA). 5 cysteine pairs are disulfide-bonded: Cys46/Cys82, Cys71/Cys335, Cys81/Cys94, Cys210/Cys313, and Cys469/Cys474. Cys62 bears the S-cysteinyl cysteine mark. FAS1 domains follow at residues 99–232 (PIDH…DRVL), 236–367 (GTSI…DEVL), 370–494 (DSAK…REII), and 498–630 (EKSL…DKLL). An N-linked (GlcNAc...) asparagine glycan is attached at Asn601. Residues 811 to 838 (QGDTPAKKIPANKRVQGPRRRSREGRSQ) are disordered. The segment covering 826–838 (QGPRRRSREGRSQ) has biased composition (basic residues).

As to quaternary structure, homodimer. Interacts with BMP1 and fibronectin. Post-translationally, gamma-carboxylation is controversial. Gamma-carboxyglutamated; gamma-carboxyglutamate residues are formed by vitamin K dependent carboxylation; these residues may be required for binding to calcium. According to a more recent report in human, does not contain vitamin K-dependent gamma-carboxyglutamate residues. Preferentially expressed in periosteum and periodontal ligament. Also expressed in the developing and adult heart.

Its subcellular location is the golgi apparatus. It localises to the secreted. The protein localises to the extracellular space. It is found in the extracellular matrix. Induces cell attachment and spreading and plays a role in cell adhesion. Enhances incorporation of BMP1 in the fibronectin matrix of connective tissues, and subsequent proteolytic activation of lysyl oxidase LOX. The protein is Periostin (Postn) of Mus musculus (Mouse).